The chain runs to 72 residues: SRY-related protein MG44 (72 aa).

Residues Val1–Lys69 constitute a DNA-binding region (HMG box).

Its subcellular location is the nucleus. This Tarentola mauritanica (Common wall gecko) protein is SRY-related protein MG44.